The chain runs to 927 residues: Protein LONGIFOLIA 1 (927 aa).

Disordered stretches follow at residues 41–198 (TGDE…EGRR), 210–257 (YDER…GHRR), 460–588 (AQKV…SDSN), and 605–626 (YERNSDITEQHTPKQRSPDLGM). Residues 86–114 (SSESSSRLSFSSSPCSSSFSSADISTTAS) are compositionally biased toward low complexity. Residues 115-125 (QFEQPGLSNGE) show a composition bias toward polar residues. The segment covering 146–165 (DIRELVRSSIHKETRTRDEE) has biased composition (basic and acidic residues). The segment covering 182–193 (KESSPSRNSNEW) has biased composition (polar residues). The segment covering 210-226 (YDERETRKTGAKLKETP) has biased composition (basic and acidic residues). The span at 232–245 (SRSNSFRSARSSCS) shows a compositional bias: low complexity. Composition is skewed to polar residues over residues 483-500 (QTESTMKNTSTRPLQSKS) and 538-553 (NKNQRQQLSRQQTESA). Basic and acidic residues-rich tracts occupy residues 569 to 584 (SEDRLSDESSDLRSLR) and 605 to 616 (YERNSDITEQHT).

In terms of assembly, interacts (via C-terminus) with TON1A and TON1B. As to expression, expressed in roots, petioles, leaf blades and floral organs.

The protein localises to the nucleus. Its function is as follows. In association with LNG2, regulates leaf morphology by promoting longitudinal polar cell elongation independently of ROT3. The sequence is that of Protein LONGIFOLIA 1 (LNG1) from Arabidopsis thaliana (Mouse-ear cress).